Reading from the N-terminus, the 257-residue chain is Snake venom serine protease KN1 (257 aa).

The signal sequence occupies residues 1–18 (MVLIRVLANLLILQLSYA). The propeptide occupies 19-24 (QKSSEL). A Peptidase S1 domain is found at 25 to 248 (VVGGHPCNIN…HLDWIKSIIA (224 aa)). Disulfide bonds link Cys-31-Cys-162, Cys-49-Cys-65, Cys-141-Cys-209, Cys-173-Cys-188, and Cys-199-Cys-224. The Charge relay system role is filled by His-64. Residue Asn-102 is glycosylated (N-linked (GlcNAc...) asparagine). Asp-109 (charge relay system) is an active-site residue. 2 N-linked (GlcNAc...) asparagine glycosylation sites follow: Asn-120 and Asn-121. Catalysis depends on Ser-203, which acts as the Charge relay system.

This sequence belongs to the peptidase S1 family. Snake venom subfamily. As to quaternary structure, monomer. As to expression, expressed by the venom gland.

The protein localises to the secreted. Its function is as follows. Snake venom serine protease that may act in the hemostasis system of the prey. In Trimeresurus stejnegeri (Chinese green tree viper), this protein is Snake venom serine protease KN1.